The following is a 192-amino-acid chain: Orotate phosphoribosyltransferase (192 aa).

E116–S124 contacts 5-phospho-alpha-D-ribose 1-diphosphate. Orotate-binding residues include T120 and R148.

It belongs to the purine/pyrimidine phosphoribosyltransferase family. PyrE subfamily. In terms of assembly, homodimer. Requires Mg(2+) as cofactor.

The catalysed reaction is orotidine 5'-phosphate + diphosphate = orotate + 5-phospho-alpha-D-ribose 1-diphosphate. It participates in pyrimidine metabolism; UMP biosynthesis via de novo pathway; UMP from orotate: step 1/2. Catalyzes the transfer of a ribosyl phosphate group from 5-phosphoribose 1-diphosphate to orotate, leading to the formation of orotidine monophosphate (OMP). In Brucella canis (strain ATCC 23365 / NCTC 10854 / RM-666), this protein is Orotate phosphoribosyltransferase.